A 452-amino-acid polypeptide reads, in one-letter code: Ribosomal L1 domain-containing protein 1 (452 aa).

M1 carries the post-translational modification N-acetylmethionine. Residues K119 and K253 each participate in a glycyl lysine isopeptide (Lys-Gly) (interchain with G-Cter in SUMO2) cross-link. Residues 277-350 (LRSLRKQELK…QKVTEECEEA (74 aa)) adopt a coiled-coil conformation. Residues 283–452 (QELKKRKREN…DKKTKAAHSN (170 aa)) are disordered. Residues 292-301 (NAKLKKESKM) are compositionally biased toward basic and acidic residues. Polar residues predominate over residues 309 to 319 (ATSLLTQSGLA). The segment covering 330 to 341 (QKKKTNKAHKKQ) has biased composition (basic residues). T334, T344, T360, T399, and T407 each carry phosphothreonine. Basic and acidic residues predominate over residues 414–423 (KDVQEFRKPE). Residues 425–440 (SSFSTPRKSGKKASNT) are compositionally biased toward polar residues. A Phosphothreonine modification is found at T429. An N6-acetyllysine modification is found at K432. S433 carries the phosphoserine modification.

This sequence belongs to the universal ribosomal protein uL1 family. Highly divergent. Interacts with ING1. Interacts with KPNA7 and KPNA2.

Its subcellular location is the nucleus. It localises to the nucleolus. In terms of biological role, regulates cellular senescence through inhibition of PTEN translation. Acts as a pro-apoptotic regulator in response to DNA damage. The sequence is that of Ribosomal L1 domain-containing protein 1 from Mus musculus (Mouse).